Reading from the N-terminus, the 115-residue chain is Transcription initiation factor IIA subunit 2 (115 aa).

It belongs to the TFIIA subunit 2 family. In terms of assembly, TFIIA is a heterodimer of the large unprocessed subunit 1 and a small subunit gamma.

Its subcellular location is the nucleus. TFIIA is a component of the transcription machinery of RNA polymerase II and plays an important role in transcriptional activation. TFIIA in a complex with tbp mediates transcriptional activity. The sequence is that of Transcription initiation factor IIA subunit 2 (gtf2a2) from Dictyostelium discoideum (Social amoeba).